A 118-amino-acid polypeptide reads, in one-letter code: Large ribosomal subunit protein uL18 (118 aa).

It belongs to the universal ribosomal protein uL18 family. As to quaternary structure, part of the 50S ribosomal subunit; part of the 5S rRNA/L5/L18/L25 subcomplex. Contacts the 5S and 23S rRNAs.

Functionally, this is one of the proteins that bind and probably mediate the attachment of the 5S RNA into the large ribosomal subunit, where it forms part of the central protuberance. The protein is Large ribosomal subunit protein uL18 of Parvibaculum lavamentivorans (strain DS-1 / DSM 13023 / NCIMB 13966).